A 395-amino-acid chain; its full sequence is MKNIVVLGSTGSIGVSSLDVIDKLGAGYGVLALSANTNADLLIKQMLKFKPRFVAVLNEDSYQKVKPYVPENTKLLPPDEDSLIFLASLPSADLIINGLVGAVGFMPLVTAIKNGKTIALANKEPIVMAGKSIMEECYRWKATILPVDSEPSAIFQCLQGTPAGRKEEDISRLLLTASGGPFFKYKGALSRVKPEAALAHPRWVMGKKITIDSATLMNKGFETIEIMHLFNVSLSDIEIVIHPQSIIHSAVEFKDGSILAQLSQPDMRLPIQYAVTYPNRMPSPVKKLTVKDMAKLEFAAPDFKKFPCLELALWSAQKEGAFPAVLSAADEIAVDAYLKEKILFTDIPKLIYSVLKETRSPSGKITISEAAEFDVWAREKAREFLANKKYKKTII.

NADPH contacts are provided by threonine 10, glycine 11, serine 12, isoleucine 13, asparagine 38, and asparagine 122. Lysine 123 is a binding site for 1-deoxy-D-xylulose 5-phosphate. Position 124 (glutamate 124) interacts with NADPH. Aspartate 148 serves as a coordination point for Mn(2+). The 1-deoxy-D-xylulose 5-phosphate site is built by serine 149, glutamate 150, serine 178, and histidine 200. Glutamate 150 serves as a coordination point for Mn(2+). Glycine 206 contacts NADPH. The 1-deoxy-D-xylulose 5-phosphate site is built by serine 213, asparagine 218, lysine 219, and glutamate 222. Glutamate 222 provides a ligand contact to Mn(2+).

It belongs to the DXR family. Requires Mg(2+) as cofactor. Mn(2+) serves as cofactor.

It carries out the reaction 2-C-methyl-D-erythritol 4-phosphate + NADP(+) = 1-deoxy-D-xylulose 5-phosphate + NADPH + H(+). It functions in the pathway isoprenoid biosynthesis; isopentenyl diphosphate biosynthesis via DXP pathway; isopentenyl diphosphate from 1-deoxy-D-xylulose 5-phosphate: step 1/6. Catalyzes the NADPH-dependent rearrangement and reduction of 1-deoxy-D-xylulose-5-phosphate (DXP) to 2-C-methyl-D-erythritol 4-phosphate (MEP). This chain is 1-deoxy-D-xylulose 5-phosphate reductoisomerase, found in Elusimicrobium minutum (strain Pei191).